The sequence spans 116 residues: PTS system cellobiose-specific EIIA component (116 aa).

A PTS EIIA type-3 domain is found at 11 to 109 (DDYMGVVMGI…AVEVVGQEQR (99 aa)). The active-site Tele-phosphohistidine intermediate is H85. H85 bears the Phosphohistidine; by HPr mark. D88 lines the Mg(2+) pocket.

In terms of assembly, homotrimer. Mg(2+) is required as a cofactor.

In terms of biological role, the phosphoenolpyruvate-dependent sugar phosphotransferase system (sugar PTS), a major carbohydrate active transport system, catalyzes the phosphorylation of incoming sugar substrates concomitantly with their translocation across the cell membrane. Involved in cellobiose transport with PtcB and CelB. This system can also transport lactose. This is PTS system cellobiose-specific EIIA component from Lactococcus lactis subsp. lactis (strain IL1403) (Streptococcus lactis).